The sequence spans 512 residues: Probable cytochrome P450 6d2 (512 aa).

C457 is a heme binding site.

It belongs to the cytochrome P450 family. The cofactor is heme.

The protein localises to the endoplasmic reticulum membrane. The protein resides in the microsome membrane. In terms of biological role, may be involved in the metabolism of insect hormones and in the breakdown of synthetic insecticides. This Drosophila melanogaster (Fruit fly) protein is Probable cytochrome P450 6d2 (Cyp6d2).